The primary structure comprises 6486 residues: Tyrocidine synthase 3 (6486 aa).

The interval 466 to 1038 (IFELIAEQAS…VAELARFLSR (573 aa)) is domain 1 (asparagine-activating). Carrier domains lie at 965-1040 (APQN…SRSE), 2002-2077 (APRN…AAAR), 3040-3115 (APTN…ATSG), 4075-4150 (AAQN…AESA), 5119-5194 (APRS…EETA), and 6162-6237 (APRN…THKR). An O-(pantetheine 4'-phosphoryl)serine mark is found at S1000, S2037, S3075, S4110, S5154, and S6197. The domain 2 (glutamine-activating) stretch occupies residues 1521 to 2070 (YEEYALTYRE…FESPTIAGLA (550 aa)). The segment at 2536 to 3113 (NKTLQALFEE…IKALAQYVAT (578 aa)) is domain 3 (tyrosine-activating). The interval 3590–4149 (EHAAVVMDGQ…HELAAHIAES (560 aa)) is domain 4 (valine-activating). The interval 4606–5203 (YPTDKTFQKL…AKGNVFSIEP (598 aa)) is domain 5 (ornithine-activating). The tract at residues 5658-6245 (LHQLFEEQVD…KRFESRYGTA (588 aa)) is domain 6 (leucine-activating).

It belongs to the ATP-dependent AMP-binding enzyme family. In terms of assembly, large multienzyme complex of TycA, TycB and TycC. Pantetheine 4'-phosphate serves as cofactor.

It functions in the pathway antibiotic biosynthesis; tyrocidine biosynthesis. Incorporates six amino acids (for tyrocidine A, Asn, Gln, Tyr, Val, Orn, and Leu) in their L-configuration into the peptide product. The protein is Tyrocidine synthase 3 (tycC) of Brevibacillus parabrevis.